Consider the following 114-residue polypeptide: Non-specific lipid-transfer protein 2 (114 aa).

Residues 1 to 23 (MEMVNKIACFVLLCMVVVAPHAE) form the signal peptide. Intrachain disulfides connect Cys27-Cys73, Cys37-Cys50, Cys51-Cys96, and Cys71-Cys110.

This sequence belongs to the plant LTP family.

Its function is as follows. Plant non-specific lipid-transfer proteins transfer phospholipids as well as galactolipids across membranes. May play a role in wax or cutin deposition in the cell walls of expanding epidermal cells and certain secretory tissues. The sequence is that of Non-specific lipid-transfer protein 2 (LTP2) from Solanum pennellii (Tomato).